Reading from the N-terminus, the 622-residue chain is Chaperone protein HscA homolog (622 aa).

This sequence belongs to the heat shock protein 70 family.

Its function is as follows. Chaperone involved in the maturation of iron-sulfur cluster-containing proteins. Has a low intrinsic ATPase activity which is markedly stimulated by HscB. The protein is Chaperone protein HscA homolog of Verminephrobacter eiseniae (strain EF01-2).